The primary structure comprises 635 residues: Probable Xaa-Pro aminopeptidase P (635 aa).

4 residues coordinate Mn(2+): Asp432, Asp443, Glu541, and Glu555.

This sequence belongs to the peptidase M24B family. Requires Mn(2+) as cofactor.

The catalysed reaction is Release of any N-terminal amino acid, including proline, that is linked to proline, even from a dipeptide or tripeptide.. Catalyzes the removal of a penultimate prolyl residue from the N-termini of peptides. In Arthroderma gypseum (strain ATCC MYA-4604 / CBS 118893) (Microsporum gypseum), this protein is Probable Xaa-Pro aminopeptidase P (AMPP).